We begin with the raw amino-acid sequence, 458 residues long: Histidine--tRNA ligase (458 aa).

This sequence belongs to the class-II aminoacyl-tRNA synthetase family. Homodimer.

It is found in the cytoplasm. It catalyses the reaction tRNA(His) + L-histidine + ATP = L-histidyl-tRNA(His) + AMP + diphosphate + H(+). In Micrococcus luteus (strain ATCC 4698 / DSM 20030 / JCM 1464 / CCM 169 / CCUG 5858 / IAM 1056 / NBRC 3333 / NCIMB 9278 / NCTC 2665 / VKM Ac-2230) (Micrococcus lysodeikticus), this protein is Histidine--tRNA ligase.